Reading from the N-terminus, the 342-residue chain is N-acetyl-gamma-glutamyl-phosphate reductase (342 aa).

The active site involves Cys149.

This sequence belongs to the NAGSA dehydrogenase family. Type 1 subfamily.

The protein resides in the cytoplasm. The catalysed reaction is N-acetyl-L-glutamate 5-semialdehyde + phosphate + NADP(+) = N-acetyl-L-glutamyl 5-phosphate + NADPH + H(+). The protein operates within amino-acid biosynthesis; L-arginine biosynthesis; N(2)-acetyl-L-ornithine from L-glutamate: step 3/4. Its function is as follows. Catalyzes the NADPH-dependent reduction of N-acetyl-5-glutamyl phosphate to yield N-acetyl-L-glutamate 5-semialdehyde. This chain is N-acetyl-gamma-glutamyl-phosphate reductase, found in Rhodobacter capsulatus (strain ATCC BAA-309 / NBRC 16581 / SB1003).